The sequence spans 67 residues: Minor structural pilin EpdD (67 aa).

Residues methionine 1–glycine 13 constitute a propeptide that is removed on maturation. A QXSXEXXXL motif is present at residues glutamine 14 to leucine 22.

The N-terminus is cleaved by the prepilin peptidase EppA, which recognizes the class III signal sequence. In terms of processing, N-glycosylated. Glycosylation is AglB-dependent. The N-glycosylation does not occur unless the signal peptide has been cleaved first.

It is found in the secreted. The protein resides in the cell surface. It localises to the fimbrium. Its function is as follows. Minor component of the type IV-like pili. Essential for pili formation. The polypeptide is Minor structural pilin EpdD (Methanococcus maripaludis (strain DSM 14266 / JCM 13030 / NBRC 101832 / S2 / LL)).